Here is a 333-residue protein sequence, read N- to C-terminus: MFRAAAPGQLRRAASLLRFQSTLVIAEHANDSLAPITLNTITAATRLGGEVSCLVAGTKCDKVAQDLCKVAGIAKVLVAQHDVYKGLLPEELTPLILATQKQFNYTHICAGASAFGKNLLPRVAAKLEVAPISDIIAIKSPDTFVRTIYAGNALCTVKCDEKVKVFSVRGTSFDAAATSGGSASSEKASSTSPVEISEWLDQKLTKSDRPELTGAKVVVSGGRGLKSGENFKLLYDLADQLHAAVGASRAAVDAGFVPNDMQVGQTGKIVAPELYIAVGISGAIQHLAGMKDSKTIVAINKDPEAPIFQVADYGIVADLFKVVPEMTEILKKK.

The N-terminal 19 residues, 1–19 (MFRAAAPGQLRRAASLLRF), are a transit peptide targeting the mitochondrion. Positions 20 to 204 (QSTLVIAEHA…EISEWLDQKL (185 aa)) are domain I. Position 59 is an N6-acetyllysine; alternate (Lys-59). Lys-59 bears the N6-succinyllysine; alternate mark. Residue Lys-62 is modified to N6-acetyllysine. Position 69 is an N6-acetyllysine; alternate (Lys-69). An N6-succinyllysine; alternate modification is found at Lys-69. N6-acetyllysine is present on Lys-75. Lys-85 carries the N6-acetyllysine; alternate modification. The residue at position 85 (Lys-85) is an N6-succinyllysine; alternate. Thr-93 bears the Phosphothreonine mark. N6-acetyllysine is present on residues Lys-101 and Lys-139. At Ser-140 the chain carries Phosphoserine. At Lys-158 the chain carries N6-acetyllysine; alternate. Lys-158 is subject to N6-succinyllysine; alternate. Lys-164 carries the N6-acetyllysine modification. Position 187 is an N6-succinyllysine (Lys-187). Lys-203 is modified (N6-acetyllysine; alternate). Lys-203 is subject to N6-succinyllysine; alternate. Residues 205–333 (TKSDRPELTG…PEMTEILKKK (129 aa)) are domain II. Lys-216 carries the post-translational modification N6-succinyllysine. Arg-223 is a binding site for FAD. An N6-acetyllysine; alternate mark is found at Lys-226 and Lys-232. N6-succinyllysine; alternate occurs at positions 226 and 232. Residues Ser-248, 263 to 266 (VGQT), 281 to 286 (SGAIQH), and Asn-300 each bind FAD. An N6-succinyllysine modification is found at Lys-301. 318–319 (DL) serves as a coordination point for FAD.

This sequence belongs to the ETF alpha-subunit/FixB family. Heterodimer composed of ETFA and ETFB. Identified in a complex that contains ETFA, ETFB and ETFRF1. Interaction with ETFRF1 promotes dissociation of the bound FAD and loss of electron transfer activity. Interacts with TASOR. FAD is required as a cofactor. Post-translationally, the N-terminus is blocked.

It localises to the mitochondrion matrix. Its function is as follows. Heterodimeric electron transfer flavoprotein that accepts electrons from several mitochondrial dehydrogenases, including acyl-CoA dehydrogenases, glutaryl-CoA and sarcosine dehydrogenase. It transfers the electrons to the main mitochondrial respiratory chain via ETF-ubiquinone oxidoreductase (ETF dehydrogenase). Required for normal mitochondrial fatty acid oxidation and normal amino acid metabolism. This is Electron transfer flavoprotein subunit alpha, mitochondrial (ETFA) from Homo sapiens (Human).